Reading from the N-terminus, the 237-residue chain is Small ribosomal subunit protein eS4 (237 aa).

Residues 37-100 (IPLAVLLRDV…NEYYRIIPDP (64 aa)) form the S4 RNA-binding domain.

This sequence belongs to the eukaryotic ribosomal protein eS4 family.

The sequence is that of Small ribosomal subunit protein eS4 from Caldivirga maquilingensis (strain ATCC 700844 / DSM 13496 / JCM 10307 / IC-167).